Consider the following 397-residue polypeptide: Stearoyl-[acyl-carrier-protein] 9-desaturase, chloroplastic (397 aa).

The transit peptide at 1–33 (MALNFNAIASKSQKLPCFALPPKATLRSPKFSM) directs the protein to the chloroplast. 6 residues coordinate Fe cation: Glu-138, Glu-176, His-179, Glu-229, Glu-262, and His-265.

Belongs to the fatty acid desaturase type 2 family. As to quaternary structure, homodimer. The cofactor is Fe(2+).

Its subcellular location is the plastid. The protein localises to the chloroplast. The enzyme catalyses octadecanoyl-[ACP] + 2 reduced [2Fe-2S]-[ferredoxin] + O2 + 2 H(+) = (9Z)-octadecenoyl-[ACP] + 2 oxidized [2Fe-2S]-[ferredoxin] + 2 H2O. The protein operates within lipid metabolism; fatty acid metabolism. Functionally, converts stearoyl-ACP to oleoyl-ACP by introduction of a cis double bond between carbons 9 and 10 of the acyl chain. The polypeptide is Stearoyl-[acyl-carrier-protein] 9-desaturase, chloroplastic (Gossypium hirsutum (Upland cotton)).